An 80-amino-acid chain; its full sequence is MNKALFLCLVVLCAAVVFAAEDLQKAKHAPFKRGAAGAAPCFCPDKVDRGDLWMFRGDCPGGYGYTSDCYVWPNICCYPH.

A signal peptide spans M1–A19. Positions A20 to F31 are excised as a propeptide. 3 disulfide bridges follow: C41–C76, C43–C69, and C59–C77.

This sequence belongs to the sea anemone type 3 (BDS) potassium channel toxin family. Weakly expressed in the ectodermal tissue from the distal and proximal tentacles, body wall, and oral disk.

It localises to the secreted. The protein resides in the nematocyst. In terms of biological role, blocks Kv3 voltage-gated potassium channels. Reduces blood pressure. In Anemonia viridis (Snakelocks anemone), this protein is Kappa-actitoxin-Avd4i.